The primary structure comprises 334 residues: MIEADRLIQPQIQAQDESIDRAMRPKMLDEYTGQDHTRAQLKVFIQAAKNRNEALDHMLIYGPPGLGKTTLAMIVANEMGVNIKSTSGPVLEKAGDLAALLTNLESGDVLFIDEIHRLSPVVEEILYPAMEDYQLDIMIGEGPAARSIKLDLPPFTLVGATTRAGALTSPLRARFGIPLRLEFYNIKDLSTIVTRSAQVMELDIDAEGAFEIARRSRGTPRIANRLLRRVRDYAQVKHDGAVTKFVAEHALDLLDVDSEGFDYMDRKLLLAIIDKFIGGPVGLDNLAAAIGEERETIEDVLEPFLIQQGFIQRTPRGRIATARAYQHFELIKPE.

Residues 4-184 (ADRLIQPQIQ…FGIPLRLEFY (181 aa)) are large ATPase domain (RuvB-L). Residues R24, G65, K68, T69, T70, 131 to 133 (EDY), R174, Y184, and R221 each bind ATP. Mg(2+) is bound at residue T69. Positions 185–255 (NIKDLSTIVT…VAEHALDLLD (71 aa)) are small ATPAse domain (RuvB-S). The head domain (RuvB-H) stretch occupies residues 258–334 (SEGFDYMDRK…YQHFELIKPE (77 aa)). The DNA site is built by R294, R313, and R318.

This sequence belongs to the RuvB family. Homohexamer. Forms an RuvA(8)-RuvB(12)-Holliday junction (HJ) complex. HJ DNA is sandwiched between 2 RuvA tetramers; dsDNA enters through RuvA and exits via RuvB. An RuvB hexamer assembles on each DNA strand where it exits the tetramer. Each RuvB hexamer is contacted by two RuvA subunits (via domain III) on 2 adjacent RuvB subunits; this complex drives branch migration. In the full resolvosome a probable DNA-RuvA(4)-RuvB(12)-RuvC(2) complex forms which resolves the HJ.

It localises to the cytoplasm. It carries out the reaction ATP + H2O = ADP + phosphate + H(+). Functionally, the RuvA-RuvB-RuvC complex processes Holliday junction (HJ) DNA during genetic recombination and DNA repair, while the RuvA-RuvB complex plays an important role in the rescue of blocked DNA replication forks via replication fork reversal (RFR). RuvA specifically binds to HJ cruciform DNA, conferring on it an open structure. The RuvB hexamer acts as an ATP-dependent pump, pulling dsDNA into and through the RuvAB complex. RuvB forms 2 homohexamers on either side of HJ DNA bound by 1 or 2 RuvA tetramers; 4 subunits per hexamer contact DNA at a time. Coordinated motions by a converter formed by DNA-disengaged RuvB subunits stimulates ATP hydrolysis and nucleotide exchange. Immobilization of the converter enables RuvB to convert the ATP-contained energy into a lever motion, pulling 2 nucleotides of DNA out of the RuvA tetramer per ATP hydrolyzed, thus driving DNA branch migration. The RuvB motors rotate together with the DNA substrate, which together with the progressing nucleotide cycle form the mechanistic basis for DNA recombination by continuous HJ branch migration. Branch migration allows RuvC to scan DNA until it finds its consensus sequence, where it cleaves and resolves cruciform DNA. The polypeptide is Holliday junction branch migration complex subunit RuvB (Shewanella baltica (strain OS155 / ATCC BAA-1091)).